The following is a 101-amino-acid chain: Small ribosomal subunit protein uS14 (101 aa).

The protein belongs to the universal ribosomal protein uS14 family. In terms of assembly, part of the 30S ribosomal subunit. Contacts proteins S3 and S10.

Binds 16S rRNA, required for the assembly of 30S particles and may also be responsible for determining the conformation of the 16S rRNA at the A site. The sequence is that of Small ribosomal subunit protein uS14 from Orientia tsutsugamushi (strain Ikeda) (Rickettsia tsutsugamushi).